A 302-amino-acid chain; its full sequence is Oxaloacetate decarboxylase 2 (302 aa).

Ser50 contacts substrate. Position 88 (Asp88) interacts with Mg(2+). Substrate contacts are provided by Arg159 and His235.

The protein belongs to the isocitrate lyase/PEP mutase superfamily. Oxaloacetate decarboxylase family. As to quaternary structure, homotetramer; dimer of dimers. The cofactor is Mg(2+).

It catalyses the reaction oxaloacetate + H(+) = pyruvate + CO2. Catalyzes the decarboxylation of oxaloacetate into pyruvate. Seems to play a role in maintaining cellular concentrations of bicarbonate and pyruvate. This Pseudomonas putida (strain W619) protein is Oxaloacetate decarboxylase 2.